The sequence spans 243 residues: MTRKDAKSSALVLFSGGQDSATCLAWALDRYETVETLGFDYGQRHRVELECREGFRSAVARTFPEWGERLGDDHMIDLSVLGSISETAMTREIEIHAASNGLPNTFVPGRNLMFMTIAAAIAYRRGLRVLVGGMCETDFSGYPDCRDDTMKALQVALNLGMDSRFVLETPLMWIDKADTWRLAHELGGDELVELIRVETHTCYLGERAELHAWGFGCGECPACRLRKRGYEAYLSGEQVTEPA.

Residue 14–24 participates in ATP binding; sequence FSGGQDSATCL. Residues cysteine 202, cysteine 217, cysteine 220, and cysteine 223 each contribute to the Zn(2+) site.

It belongs to the QueC family. The cofactor is Zn(2+).

The catalysed reaction is 7-carboxy-7-deazaguanine + NH4(+) + ATP = 7-cyano-7-deazaguanine + ADP + phosphate + H2O + H(+). It participates in purine metabolism; 7-cyano-7-deazaguanine biosynthesis. Functionally, catalyzes the ATP-dependent conversion of 7-carboxy-7-deazaguanine (CDG) to 7-cyano-7-deazaguanine (preQ(0)). This chain is 7-cyano-7-deazaguanine synthase, found in Paraburkholderia phymatum (strain DSM 17167 / CIP 108236 / LMG 21445 / STM815) (Burkholderia phymatum).